The chain runs to 757 residues: Polyribonucleotide nucleotidyltransferase (757 aa).

Mg(2+)-binding residues include D482 and D488. Residues 549-608 (PRMLSFYIDKDKISAAIGSKGKNIRSVCERSNAKIEIGDDGKVSVFATSGTEAEIAKSMM) enclose the KH domain. Positions 618 to 686 (GSIVDVKVVR…KGGCPKLSRR (69 aa)) constitute an S1 motif domain. The disordered stretch occupies residues 698-757 (GELYNEERKDGPNDRDNYYNNSFSRKPGGSHHKRPPRPHSGFSNRNRPKFGNNDSSSGFY). A compositionally biased stretch (basic and acidic residues) spans 702–714 (NEERKDGPNDRDN). Residues 725–734 (GGSHHKRPPR) are compositionally biased toward basic residues.

Belongs to the polyribonucleotide nucleotidyltransferase family. Mg(2+) is required as a cofactor.

The protein resides in the cytoplasm. The catalysed reaction is RNA(n+1) + phosphate = RNA(n) + a ribonucleoside 5'-diphosphate. Its function is as follows. Involved in mRNA degradation. Catalyzes the phosphorolysis of single-stranded polyribonucleotides processively in the 3'- to 5'-direction. The protein is Polyribonucleotide nucleotidyltransferase of Wolbachia pipientis wMel.